The sequence spans 166 residues: 3-hydroxyacyl-[acyl-carrier-protein] dehydratase FabZ (166 aa).

Histidine 72 is a catalytic residue.

It belongs to the thioester dehydratase family. FabZ subfamily.

The protein localises to the cytoplasm. The enzyme catalyses a (3R)-hydroxyacyl-[ACP] = a (2E)-enoyl-[ACP] + H2O. Involved in unsaturated fatty acids biosynthesis. Catalyzes the dehydration of short chain beta-hydroxyacyl-ACPs and long chain saturated and unsaturated beta-hydroxyacyl-ACPs. This is 3-hydroxyacyl-[acyl-carrier-protein] dehydratase FabZ from Synechococcus sp. (strain JA-2-3B'a(2-13)) (Cyanobacteria bacterium Yellowstone B-Prime).